Here is a 719-residue protein sequence, read N- to C-terminus: Ferric reductase transmembrane component 4 (719 aa).

A signal peptide spans methionine 1–alanine 18. Residues lysine 19–proline 156 are Extracellular-facing. Asparagine 51, asparagine 80, asparagine 101, asparagine 113, asparagine 127, and asparagine 135 each carry an N-linked (GlcNAc...) asparagine glycan. Residues tyrosine 157–isoleucine 177 form a helical membrane-spanning segment. The Cytoplasmic segment spans residues arginine 178–arginine 228. A helical transmembrane segment spans residues phenylalanine 229 to tyrosine 249. The Extracellular segment spans residues glutamine 250–histidine 267. Residues phenylalanine 268–alanine 288 form a helical membrane-spanning segment. The Ferric oxidoreductase domain maps to serine 273 to isoleucine 407. Residues glycine 289–serine 304 are Cytoplasmic-facing. The chain crosses the membrane as a helical span at residues phenylalanine 305–alanine 325. The heme site is built by histidine 309 and histidine 323. Over glycine 326 to tryptophan 346 the chain is Extracellular. A helical membrane pass occupies residues lysine 347–phenylalanine 367. The Cytoplasmic portion of the chain corresponds to arginine 368–glutamate 373. The helical transmembrane segment at threonine 374–valine 394 threads the bilayer. Histidine 379 and histidine 393 together coordinate heme. Threonine 395 is a topological domain (extracellular). A helical membrane pass occupies residues asparagine 396–valine 416. An FAD-binding FR-type domain is found at alanine 408–alanine 527. Residues arginine 417–tryptophan 719 are Cytoplasmic-facing. Histidine 472–aspartate 478 provides a ligand contact to FAD. Residue glycine 519–glycine 522 participates in NADP(+) binding. Composition is skewed to polar residues over residues glutamate 606–threonine 618 and serine 625–proline 643. Positions glutamate 606–proline 643 are disordered. Position 685-686 (cysteine 685–glycine 686) interacts with NADP(+).

The protein belongs to the ferric reductase (FRE) family. FAD serves as cofactor.

It localises to the cell membrane. The catalysed reaction is 2 a Fe(II)-siderophore + NADP(+) + H(+) = 2 a Fe(III)-siderophore + NADPH. Its function is as follows. Siderophore-iron reductase responsible for reducing extracellular iron prior to import. Catalyzes the reductive uptake of Fe(3+) bound to dihydroxamate rhodotorulic acid. Fe(3+) is reduced to Fe(2+), which then dissociates from the siderophore and can be imported by the high-affinity Fe(2+) transport complex in the plasma membrane. This chain is Ferric reductase transmembrane component 4 (FRE4), found in Saccharomyces cerevisiae (strain ATCC 204508 / S288c) (Baker's yeast).